The primary structure comprises 388 residues: Trans-enoyl reductase tenC (388 aa).

51–54 (VDGK) is an NADP(+) binding site. 142 to 149 (VGVASVGM) lines the substrate pocket. Residues 219-222 (SSES), Y237, and 284-285 (LD) each bind NADP(+). 304–308 (SFTQF) contacts substrate. 373-374 (IK) contacts NADP(+).

This sequence belongs to the zinc-containing alcohol dehydrogenase family. In terms of assembly, monomer.

The protein operates within secondary metabolite biosynthesis. Functionally, trans-enoyl reductase; part of the gene cluster that mediates the biosynthesis of tenellin-type 2-pyridones, iron-chelating compounds involved in iron stress tolerance, competition with the natural competitor fungus Metarhizium robertsii and insect hosts infection. TenC collaborates with the hybrid PKS-NRPS synthetase tenS to catalyze the assembly of the polyketide-amino acid backbone, since tenS lacks a designated enoylreductase (ER) domain. Upon formation of the polyketide backbone on the thiotemplate of tenS, the triketide is transferred to the NRPS module and linked to tyrosine to produce the pyrrolidine-2-dione intermediates, including pretellinin A, 11-hydropretellenin A, 12-hydropretellenin A, 13-hydropretellenin A, 14-hydropretellenin A, 12-oxopretellenin A and prototellinin D. The pathway begins with the assembly of the polyketide-amino acid backbone by the hybrid PKS-NRPS tenS with the help of the enoyl reductase tenC. These enzymes catalyze the synthesis of the pyrrolidine-2-dione intermediates pretellinin A, 11-hydropretellenin A, 12-hydropretellenin A, 13-hydropretellenin A, 14-hydropretellenin A, 12-oxopretellenin A and prototellinin D. The cytochrome P450 monooxygenase tenA then catalyzes an oxidative ring expansion of pretenellin A and 14-hydropretellenin A to form the 2-pyridone core, leading to pretenellin B and pyridovericin, respectively. The cytochrome P450 monooxygenase tenB is then required for the selective N-hydroxylation of the 2-pyridone nitrogen of yield tellinin and 15-hydroxytellenin (15-HT), respectively. The UDP-glucosyltransferase GT1 and the methyltransferase MT1, located outside the tenS gene cluster, contribute to the stepwise glycosylation and methylation of 15-HT to obtain the glycoside pyridovericin-N-O-(4-O-methyl-beta-D-glucopyranoside) (PMGP). Additional related compounds such as 1-O-methyl-15-HT, (8Z)-1-O-methyl-15-HT, and O-methyltenellin A are also produced but the enzymes involved in their biosynthesis have still to be determined. The polypeptide is Trans-enoyl reductase tenC (Beauveria bassiana (White muscardine disease fungus)).